A 291-amino-acid polypeptide reads, in one-letter code: N-acetylmannosamine kinase (291 aa).

Residues 5 to 12 and 132 to 139 each bind ATP; these read AIDIGGTK and GVGGGVVS. Residues H156, C166, C168, and C173 each contribute to the Zn(2+) site.

Belongs to the ROK (NagC/XylR) family. NanK subfamily. As to quaternary structure, homodimer.

It catalyses the reaction an N-acyl-D-mannosamine + ATP = an N-acyl-D-mannosamine 6-phosphate + ADP + H(+). The protein operates within amino-sugar metabolism; N-acetylneuraminate degradation; D-fructose 6-phosphate from N-acetylneuraminate: step 2/5. Catalyzes the phosphorylation of N-acetylmannosamine (ManNAc) to ManNAc-6-P. In Escherichia coli (strain SMS-3-5 / SECEC), this protein is N-acetylmannosamine kinase.